We begin with the raw amino-acid sequence, 417 residues long: UPF0597 protein Cphy_1256 (417 aa).

The protein belongs to the UPF0597 family.

In Lachnoclostridium phytofermentans (strain ATCC 700394 / DSM 18823 / ISDg) (Clostridium phytofermentans), this protein is UPF0597 protein Cphy_1256.